Consider the following 563-residue polypeptide: NAD-dependent malic enzyme (563 aa).

Tyr101 functions as the Proton donor in the catalytic mechanism. An NAD(+)-binding site is contributed by Arg154. Lys172 acts as the Proton acceptor in catalysis. A divalent metal cation contacts are provided by Glu243, Asp244, and Asp267. NAD(+) contacts are provided by Asp267 and Asn416.

The protein belongs to the malic enzymes family. In terms of assembly, homotetramer. Mg(2+) is required as a cofactor. The cofactor is Mn(2+).

The catalysed reaction is (S)-malate + NAD(+) = pyruvate + CO2 + NADH. It carries out the reaction oxaloacetate + H(+) = pyruvate + CO2. The chain is NAD-dependent malic enzyme from Pseudomonas savastanoi pv. phaseolicola (strain 1448A / Race 6) (Pseudomonas syringae pv. phaseolicola (strain 1448A / Race 6)).